The sequence spans 227 residues: PKHD-type hydroxylase Bphyt_7102 (227 aa).

In terms of domain architecture, Fe2OG dioxygenase spans 80 to 179 (QVYPPLFNRY…RIASFFWVQS (100 aa)). Residues histidine 98, aspartate 100, and histidine 160 each coordinate Fe cation. Arginine 170 is a binding site for 2-oxoglutarate.

Fe(2+) serves as cofactor. L-ascorbate is required as a cofactor.

This Paraburkholderia phytofirmans (strain DSM 17436 / LMG 22146 / PsJN) (Burkholderia phytofirmans) protein is PKHD-type hydroxylase Bphyt_7102.